The following is a 355-amino-acid chain: uncharacterized protein (355 aa).

Cys-2 serves as the catalytic For GATase activity. A Glutamine amidotransferase type-2 domain is found at 2–248; the sequence is CELLGICFNK…NGELMVFKNG (247 aa).

This is an uncharacterized protein from Methanocaldococcus jannaschii (strain ATCC 43067 / DSM 2661 / JAL-1 / JCM 10045 / NBRC 100440) (Methanococcus jannaschii).